Consider the following 184-residue polypeptide: Photosystem I assembly protein Ycf4 (184 aa).

The next 2 helical transmembrane spans lie at 22–42 (FGWA…GASS) and 57–77 (IVFF…LFIS).

It belongs to the Ycf4 family.

It localises to the plastid. Its subcellular location is the chloroplast thylakoid membrane. Its function is as follows. Seems to be required for the assembly of the photosystem I complex. The polypeptide is Photosystem I assembly protein Ycf4 (Acorus calamus (Sweet flag)).